We begin with the raw amino-acid sequence, 1846 residues long: Peripheral-type benzodiazepine receptor-associated protein 1 (1846 aa).

3 disordered regions span residues 57-97, 281-318, and 560-628; these read EESS…GYSC, NQRE…DDVE, and GPKD…SEVE. Positions 576–587 are enriched in polar residues; it reads PKSSEPALTTLT. Low complexity predominate over residues 599–612; the sequence is SLSNSSRSESIHNS. The 68-residue stretch at 649–716 folds into the SH3 1 domain; the sequence is ARIQVFLARY…PSNFVERVSD (68 aa). The segment at 726 to 785 is disordered; that stretch reads ELADSSHSSGPELSFLSGGGGGCSSGGQSSGGRSQPRPEEEAAGDELSLSPPPEGLGEPL. Residues 742-755 show a composition bias toward gly residues; that stretch reads SGGGGGCSSGGQSS. 3 consecutive Fibronectin type-III domains span residues 787–878, 880–972, and 977–1075; these read VPYP…AGAG, VPSQ…TLPA, and APLD…PALA. 7 disordered regions span residues 1084 to 1107, 1163 to 1219, 1243 to 1302, 1322 to 1476, 1492 to 1617, 1704 to 1755, and 1812 to 1846; these read SCLS…GLGD, EPTL…LDSG, HSRN…SDEE, SIPE…PESS, YDSE…QDLP, LTEA…AAQK, and VPSN…RVQC. Residues 1202–1219 show a composition bias toward basic and acidic residues; sequence TQKKPSIEACHGGDLDSG. Residues 1251-1265 show a composition bias toward acidic residues; it reads DIQEEEEEEEEEEEE. The segment covering 1270 to 1283 has biased composition (polar residues); sequence PCSSQKQVAGNSIR. The segment covering 1324–1335 has biased composition (acidic residues); sequence PEEEEEEEEEEG. Basic and acidic residues-rich tracts occupy residues 1411–1420 and 1545–1577; these read RPQDPREHCS and AWEK…ESRG. The 69-residue stretch at 1616 to 1684 folds into the SH3 2 domain; the sequence is LPVRVFVALF…PCNMVAEVAV (69 aa). Over residues 1705–1719 the composition is skewed to polar residues; it reads TEASGNGPSVYSSAH. The region spanning 1755–1822 is the SH3 3 domain; the sequence is KTSRPMVAAF…PSNFLEGPGP (68 aa). Residues 1817 to 1830 show a composition bias toward low complexity; sequence LEGPGPESGSLESG.

It belongs to the RIMBP family. Interacts with RIMS1 and RIMS2. Interacts with TSPO. Interacts with CACNA1A. As to expression, predominantly expressed in the brain.

The protein localises to the cytoplasm. It is found in the mitochondrion. In terms of biological role, required for synaptic transmission regulation. It probably controls the recruitement of voltage-gated calcium channels to the presynaptic membrane, and modulates neurotransmitter release. The chain is Peripheral-type benzodiazepine receptor-associated protein 1 from Mus musculus (Mouse).